A 469-amino-acid chain; its full sequence is MNPNQKLFASSGIAIALGIINLLIGISNMSLNISLYSKGENHKSDNLTCTNINQNNTTMVNTYINNTTIIDKNTKMENPGYLLLNKSLCNVEGWVVIAKDNAIRFGESEQIIVTREPYVSCDPLSCKMYALHQGTTIRNKHSNGTTHDRTAFRGLISTPLGNPPTVSNSEFICVGWSSTSCHDGVSRMTICVQGNNENATATVYYNKRLTTTIKTWAKNILRTQESECVCHNSTCVVVMTDGPANNQAFTKVIYFHKGTIIKEEPLKGSAKHIEECSCYGHNQRVTCVCRDNWQGANRPVIEIDMNNLEHTSRYICTGVLTDTSRPKDKAIGECFNPITGSPGAPGIKGFGFLNENNTWLGRTISPKLRSGFEMLKIPNAGTDPDSKIKERQEIVGNDNWSGYSGSFIDYWNDNSECYNPCFYVELIRGRPEEAKYVEWTSNSLIALCGSPIPVGSGSFPDGAQIKYFS.

Over 1–6 the chain is Intravirion; it reads MNPNQK. Residues 7-27 traverse the membrane as a helical segment; the sequence is LFASSGIAIALGIINLLIGIS. The segment at 11 to 33 is involved in apical transport and lipid raft association; it reads SGIAIALGIINLLIGISNMSLNI. N-linked (GlcNAc...) asparagine; by host glycans are attached at residues Asn-28, Asn-32, Asn-46, Asn-55, Asn-56, Asn-65, Asn-66, and Asn-85. The Virion surface segment spans residues 28-469; sequence NMSLNISLYS…PDGAQIKYFS (442 aa). Residues 36 to 85 form a hypervariable stalk region region; sequence YSKGENHKSDNLTCTNINQNNTTMVNTYINNTTIIDKNTKMENPGYLLLN. The head of neuraminidase stretch occupies residues 88–469; that stretch reads LCNVEGWVVI…PDGAQIKYFS (382 aa). Intrachain disulfides connect Cys-89/Cys-417, Cys-121/Cys-126, Cys-181/Cys-228, Cys-230/Cys-235, Cys-276/Cys-289, Cys-278/Cys-287, Cys-316/Cys-334, and Cys-421/Cys-448. Arg-115 provides a ligand contact to substrate. A glycan (N-linked (GlcNAc...) asparagine; by host) is linked at Asn-143. Residue Asp-148 is the Proton donor/acceptor of the active site. Arg-149 serves as a coordination point for substrate. N-linked (GlcNAc...) asparagine; by host glycans are attached at residues Asn-198 and Asn-232. 274-275 serves as a coordination point for substrate; that stretch reads EE. Substrate is bound at residue Arg-290. Ca(2+) is bound by residues Asp-291, Gly-295, and Asp-322. Residue Asn-356 is glycosylated (N-linked (GlcNAc...) asparagine; by host). Arg-369 contacts substrate. N-linked (GlcNAc...) asparagine; by host glycosylation occurs at Asn-399. The Nucleophile role is filled by Tyr-403.

It belongs to the glycosyl hydrolase 34 family. Homotetramer. Ca(2+) serves as cofactor. N-glycosylated.

Its subcellular location is the virion membrane. The protein localises to the host apical cell membrane. The catalysed reaction is Hydrolysis of alpha-(2-&gt;3)-, alpha-(2-&gt;6)-, alpha-(2-&gt;8)- glycosidic linkages of terminal sialic acid residues in oligosaccharides, glycoproteins, glycolipids, colominic acid and synthetic substrates.. With respect to regulation, inhibited by the neuraminidase inhibitors zanamivir (Relenza) and oseltamivir (Tamiflu). These drugs interfere with the release of progeny virus from infected cells and are effective against all influenza strains. Resistance to neuraminidase inhibitors is quite rare. Its function is as follows. Catalyzes the removal of terminal sialic acid residues from viral and cellular glycoconjugates. Cleaves off the terminal sialic acids on the glycosylated HA during virus budding to facilitate virus release. Additionally helps virus spread through the circulation by further removing sialic acids from the cell surface. These cleavages prevent self-aggregation and ensure the efficient spread of the progeny virus from cell to cell. Otherwise, infection would be limited to one round of replication. Described as a receptor-destroying enzyme because it cleaves a terminal sialic acid from the cellular receptors. May facilitate viral invasion of the upper airways by cleaving the sialic acid moieties on the mucin of the airway epithelial cells. Likely to plays a role in the budding process through its association with lipid rafts during intracellular transport. May additionally display a raft-association independent effect on budding. Plays a role in the determination of host range restriction on replication and virulence. Sialidase activity in late endosome/lysosome traffic seems to enhance virus replication. This Influenza A virus (strain A/Equine/Prague/1/1956 H7N7) protein is Neuraminidase.